Here is an 85-residue protein sequence, read N- to C-terminus: Arminin 2b (85 aa).

Positions 1–18 (MKTVFAILFLAFIALTYA) are cleaved as a signal peptide. The propeptide occupies 19-57 (RSYEDVKEEIKNEIEKEILEDLEEESDELNDKSKEINDA). Position 82 is an alanine amide (alanine 82).

The protein belongs to the arminin family. As to expression, expressed in entodermal epithelium along the body column.

The protein localises to the secreted. It localises to the target cell membrane. Functionally, antimicrobial peptide with a broad-spectrum antimicrobial activity. Keeps its antibacterial activity under a wide range of salt concentrations that mimic physiological conditions of human blood, which is surprising, since Hydra is an obligate freshwater animal with nearly no salt tolerance. Does not affect red blood cells. The protein is Arminin 2b of Hydra vulgaris (Hydra).